Consider the following 1011-residue polypeptide: Protein argonaute 1C (1011 aa).

Positions 1-11 (MASRRPTHRHH) are enriched in basic residues. Disordered regions lie at residues 1–95 (MASR…SPLA) and 107–147 (RPSE…PLRP). 2 stretches are compositionally biased toward low complexity: residues 28 to 53 (ARYA…ARGA) and 61 to 92 (QQQQ…ASSS). Residues 127-140 (ATTTPHHIPSSSKS) show a composition bias toward polar residues. A PAZ domain is found at 352–462 (PVIDFVAQLL…LPMEVCKIVE (111 aa)). The region spanning 638 to 959 (LLIGILPDNN…AAFRARFYME (322 aa)) is the Piwi domain. Over residues 963-982 (SDSSSVVSGPGVRGPLSGSS) the composition is skewed to low complexity. Residues 963-994 (SDSSSVVSGPGVRGPLSGSSTSRTRAPGGAAV) are disordered.

The protein belongs to the argonaute family. Ago subfamily.

Probably involved in the RNA silencing pathway. May bind to short RNAs such as microRNAs (miRNAs) or short interfering RNAs (siRNAs), and represses the translation of mRNAs which are complementary to them. This chain is Protein argonaute 1C (AGO1C), found in Oryza sativa subsp. japonica (Rice).